A 669-amino-acid chain; its full sequence is Soluble guanylate cyclase 89Db (669 aa).

Residue H104 participates in heme binding. A coiled-coil region spans residues 430–458; it reads QHCSKLEIMFEKEEQRSDELEKSLELADS. The Guanylate cyclase domain maps to 494-620; it reads SVIFIEVMNI…DTVNTASRME (127 aa).

This sequence belongs to the adenylyl cyclase class-4/guanylyl cyclase family. Heterodimer; with Gyc88E, in the presence of magnesium or manganese. Heme is required as a cofactor. In terms of tissue distribution, expressed in embryos in a segmental pattern in the ventral nerve cord (VNC) and in the brain, beginning at stage 13 and continuing through to stage 17. Colocalized with Gyc-89Db in several peripheral neurons that innervate trachea, basiconical sensilla and the sensory cones in the posterior segments of the embryo. Expression in wandering 3rd instar larvae is most prominent in a small cluster of cells located in the anterior medial region of each brain lobe. In the VNC, expression is found in scattered cells both laterally and at the midline.

It localises to the cytoplasm. The enzyme catalyses GTP = 3',5'-cyclic GMP + diphosphate. Its activity is regulated as follows. Probably not activated by nitric oxide (NO). Heterodimer exhibits some stimulation, compounds (SIN-1 and two of the NONOates) that were ineffective at stimulating Gyc-88E homodimer did stimulate the heterodimer. In terms of biological role, heterodimers with Gyc88E are activated in response to changing oxygen concentrations, alerting flies to hypoxic environments. Under normal oxygen concentrations, oxygen binds to the heme group and results in low levels of guanylyl cyclase activity. When exposed to reduced oxygen concentrations, the oxygen dissociates from the heme group resulting in activation of the enzyme. The chain is Soluble guanylate cyclase 89Db from Drosophila melanogaster (Fruit fly).